Reading from the N-terminus, the 2555-residue chain is Neurogenic locus notch homolog protein 1 (2555 aa).

Positions 1–18 (MPPLLAPLLCLALLPALA) are cleaved as a signal peptide. At 19–1735 (ARGPRCSQPG…VEPPPPAQLH (1717 aa)) the chain is on the extracellular side. EGF-like domains lie at 20–58 (RGPRCSQPGETCLNGGKCEAANGTEACVCGGAFVGPRCQ), 59–99 (DPNP…PLCL), 102–139 (LDNACLTNPCRNGGTCDLLTLTEYKCRCPPGWSGKSCQ), and 140–176 (QADPCASNPCANGGQCLPFEASYICHCPPSFHGPTCR). 33 disulfide bridges follow: Cys-24-Cys-37, Cys-31-Cys-46, Cys-48-Cys-57, Cys-63-Cys-74, Cys-68-Cys-87, Cys-89-Cys-98, Cys-106-Cys-117, Cys-111-Cys-127, Cys-129-Cys-138, Cys-144-Cys-155, Cys-149-Cys-164, Cys-166-Cys-175, Cys-182-Cys-195, Cys-189-Cys-204, Cys-206-Cys-215, Cys-222-Cys-233, Cys-227-Cys-243, Cys-245-Cys-254, Cys-261-Cys-272, Cys-266-Cys-281, Cys-283-Cys-292, Cys-299-Cys-312, Cys-306-Cys-321, Cys-323-Cys-332, Cys-339-Cys-350, Cys-344-Cys-359, Cys-361-Cys-370, Cys-376-Cys-387, Cys-381-Cys-398, Cys-400-Cys-409, Cys-416-Cys-429, Cys-423-Cys-438, and Cys-440-Cys-449. An N-linked (GlcNAc...) asparagine glycan is attached at Asn-41. The O-linked (Glc...) serine glycan is linked to Ser-65. O-linked (Fuc...) threonine glycosylation occurs at Thr-73. Thr-116 is a glycosylation site (O-linked (Fuc...) threonine). An O-linked (Glc...) serine glycan is attached at Ser-146. In terms of domain architecture, EGF-like 5; calcium-binding spans 178–216 (DVNECGQKPGLCRHGGTCHNEVGSYRCVCRATHTGPNCE). An O-linked (Fuc...) threonine glycan is attached at Thr-194. The EGF-like 6 domain occupies 218–255 (PYVPCSPSPCQNGGTCRPTGDVTHECACLPGFTGQNCE). A glycan (O-linked (Fuc...) threonine; alternate) is linked at Thr-232. O-linked (GalNAc...) threonine; alternate glycosylation occurs at Thr-232. Residues 257 to 293 (NIDDCPGNNCKNGGACVDGVNTYNCRCPPEWTGQYCT) enclose the EGF-like 7; calcium-binding domain. One can recognise an EGF-like 8; calcium-binding domain in the interval 295–333 (DVDECQLMPNACQNGGTCHNTHGGYNCVCVNGWTGEDCS). Thr-311 carries O-linked (Fuc...) threonine glycosylation. One can recognise an EGF-like 9; calcium-binding domain in the interval 335-371 (NIDDCASAACFHGATCHDRVASFYCECPHGRTGLLCH). Ser-341 carries an O-linked (Glc...) serine glycan. O-linked (Fuc...) threonine glycosylation is present at Thr-349. The region spanning 372 to 410 (LNDACISNPCNEGSNCDTNPVNGKAICTCPSGYTGPACS) is the EGF-like 10 domain. Residue Ser-378 is glycosylated (O-linked (Glc...) serine). In terms of domain architecture, EGF-like 11; calcium-binding spans 412-450 (DVDECSLGANPCEHAGKCINTLGSFECQCLQGYTGPRCE). Residues 420-421 (AN) form an interaction with DLL4 region. Ca(2+) contacts are provided by Thr-432 and Ser-435. O-linked (Glc...) serine glycosylation is present at Ser-435. The interaction with DLL4 stretch occupies residues 448–452 (RCEID). Asp-452, Val-453, and Glu-455 together coordinate Ca(2+). The EGF-like 12; calcium-binding domain occupies 452 to 488 (DVNECVSNPCQNDATCLDQIGEFQCICMPGYEGVHCE). 3 disulfide bridges follow: Cys-456/Cys-467, Cys-461/Cys-476, and Cys-478/Cys-487. A glycan (O-linked (Glc...) serine) is linked at Ser-458. Thr-466 is a glycosylation site (O-linked (Fuc...) threonine). Ca(2+) is bound by residues Asp-469 and Gln-470. Asn-490, Thr-491, and Glu-493 together coordinate Ca(2+). The EGF-like 13; calcium-binding domain maps to 490-526 (NTDECASSPCLHNGRCLDKINEFQCECPTGFTGHLCQ). 74 cysteine pairs are disulfide-bonded: Cys-494-Cys-505, Cys-499-Cys-514, Cys-516-Cys-525, Cys-532-Cys-543, Cys-537-Cys-552, Cys-554-Cys-563, Cys-570-Cys-580, Cys-575-Cys-589, Cys-591-Cys-600, Cys-607-Cys-618, Cys-612-Cys-627, Cys-629-Cys-638, Cys-645-Cys-655, Cys-650-Cys-664, Cys-666-Cys-675, Cys-682-Cys-693, Cys-687-Cys-702, Cys-704-Cys-713, Cys-720-Cys-730, Cys-725-Cys-739, Cys-741-Cys-750, Cys-757-Cys-768, Cys-762-Cys-777, Cys-779-Cys-788, Cys-795-Cys-806, Cys-800-Cys-815, Cys-817-Cys-826, Cys-833-Cys-844, Cys-838-Cys-855, Cys-857-Cys-866, Cys-873-Cys-884, Cys-878-Cys-893, Cys-895-Cys-904, Cys-911-Cys-922, Cys-916-Cys-931, Cys-933-Cys-942, Cys-949-Cys-960, Cys-954-Cys-969, Cys-971-Cys-980, Cys-987-Cys-998, Cys-992-Cys-1007, Cys-1009-Cys-1018, Cys-1025-Cys-1036, Cys-1030-Cys-1045, Cys-1047-Cys-1056, Cys-1063-Cys-1074, Cys-1068-Cys-1083, Cys-1085-Cys-1094, Cys-1101-Cys-1122, Cys-1116-Cys-1131, Cys-1133-Cys-1142, Cys-1149-Cys-1160, Cys-1154-Cys-1169, Cys-1171-Cys-1180, Cys-1187-Cys-1198, Cys-1192-Cys-1207, Cys-1209-Cys-1218, Cys-1238-Cys-1253, Cys-1255-Cys-1264, Cys-1271-Cys-1284, Cys-1276-Cys-1293, Cys-1295-Cys-1304, Cys-1311-Cys-1322, Cys-1316-Cys-1334, Cys-1336-Cys-1345, Cys-1352-Cys-1363, Cys-1357-Cys-1372, Cys-1374-Cys-1383, Cys-1391-Cys-1403, Cys-1397-Cys-1414, Cys-1416-Cys-1425, Cys-1449-Cys-1472, Cys-1454-Cys-1467, and Cys-1463-Cys-1479. Residue Ser-496 is glycosylated (O-linked (Glc...) serine). Ca(2+) is bound by residues Asp-507 and Lys-508. One can recognise an EGF-like 14; calcium-binding domain in the interval 528 to 564 (DVDECASTPCKNGAKCLDGPNTYTCVCTEGYTGTHCE). O-linked (Glc...) serine glycosylation is present at Ser-534. The 36-residue stretch at 566–601 (DIDECDPDPCHYGSCKDGVATFTCLCRPGYTGHHCE) folds into the EGF-like 15; calcium-binding domain. The 37-residue stretch at 603-639 (NINECSSQPCRHGGTCQDRDNAYLCFCLKGTTGPNCE) folds into the EGF-like 16; calcium-binding domain. Ser-609 is a glycosylation site (O-linked (Glc...) serine). The O-linked (Fuc...) threonine glycan is linked to Thr-617. Positions 641–676 (NLDDCASSPCDSGTCLDKIDGYECACEPGYTGSMCN) constitute an EGF-like 17; calcium-binding domain. O-linked (Glc...) serine glycosylation is present at Ser-647. The region spanning 678 to 714 (NIDECAGNPCHNGGTCEDGINGFTCRCPEGYHDPTCL) is the EGF-like 18; calcium-binding domain. Thr-692 is a glycosylation site (O-linked (Fuc...) threonine). The EGF-like 19; calcium-binding domain occupies 716–751 (EVNECNSNPCVHGACRDSLNGYKCDCDPGWSGTNCD). Ser-722 carries O-linked (Glc...) serine glycosylation. Residues 753–789 (NNNECESNPCVNGGTCKDMTSGYVCTCREGFSGPNCQ) form the EGF-like 20 domain. A glycan (O-linked (Glc...) serine) is linked at Ser-759. A glycan (O-linked (Fuc...) threonine) is linked at Thr-767. Residue Ser-784 is glycosylated (O-linked (GlcNAc) serine). The EGF-like 21; calcium-binding domain maps to 791–827 (NINECASNPCLNQGTCIDDVAGYKCNCLLPYTGATCE). Ser-797 carries O-linked (Glc...) serine glycosylation. The O-linked (Fuc...) threonine glycan is linked to Thr-805. Positions 829–867 (VLAPCAPSPCRNGGECRQSEDYESFSCVCPTGWQGQTCE) constitute an EGF-like 22 domain. The EGF-like 23; calcium-binding domain maps to 869 to 905 (DINECVLSPCRHGASCQNTHGGYRCHCQAGYSGRNCE). The 37-residue stretch at 907–943 (DIDDCRPNPCHNGGSCTDGINTAFCDCLPGFRGTFCE) folds into the EGF-like 24 domain. O-linked (Fuc) serine glycosylation is present at Ser-921. Positions 945–981 (DINECASDPCRNGANCTDCVDSYTCTCPAGFSGIHCE) constitute an EGF-like 25; calcium-binding domain. An O-linked (Glc...) serine glycan is attached at Ser-951. Asn-959 carries N-linked (GlcNAc...) asparagine glycosylation. EGF-like domains are found at residues 983–1019 (NTPDCTESSCFNGGTCVDGINSFTCLCPPGFTGSYCQ), 1021–1057 (DVNECDSQPCLHGGTCQDGCGSYRCTCPQGYTGPNCQ), 1059–1095 (LVHWCDSSPCKNGGKCWQTHTQYRCECPSGWTGLYCD), 1097–1143 (PSVS…SYCE), and 1145–1181 (LVDECSPSPCQNGATCTDYLGGYSCKCVAGYHGVNCS). An O-linked (Fuc...) threonine glycan is attached at Thr-997. Ser-1027 carries O-linked (Glc...) serine glycosylation. The O-linked (Fuc...) threonine glycan is linked to Thr-1035. Ser-1065 carries an O-linked (Glc...) serine glycan. Thr-1159 carries an O-linked (Fuc...) threonine glycan. N-linked (GlcNAc...) asparagine glycosylation occurs at Asn-1179. In terms of domain architecture, EGF-like 31; calcium-binding spans 1183 to 1219 (EIDECLSHPCQNGGTCLDLPNTYKCSCPRGTQGVHCE). Ser-1189 carries O-linked (Glc...) serine glycosylation. A glycan (O-linked (Fuc...) threonine) is linked at Thr-1197. The 45-residue stretch at 1221–1265 (NVDDCNPPVDPVSRSPKCFNNGTCVDQVGGYSCTCPPGFVGERCE) folds into the EGF-like 32; calcium-binding domain. The N-linked (GlcNAc...) asparagine glycan is linked to Asn-1241. EGF-like domains are found at residues 1267–1305 (DVNECLSNPCDARGTQNCVQRVNDFHCECRAGHTGRRCE), 1307–1346 (VINGCKGKPCKNGGTCAVASNTARGFICKCPAGFEGATCE), 1348–1384 (DARTCGSLRCLNGGTCISGPRSPTCLCLGPFTGPECQ), and 1387–1426 (ASSPCLGGNPCYNQGTCEPTSESPFYRCLCPAKFNGLLCH). O-linked (Glc...) serine glycosylation is present at Ser-1273. O-linked (Fuc...) threonine glycosylation is present at Thr-1362. A glycan (O-linked (GlcNAc...) threonine) is linked at Thr-1379. Thr-1402 is a glycosylation site (O-linked (Fuc...) threonine; alternate). O-linked (GalNAc...) threonine; alternate glycosylation is present at Thr-1402. LNR repeat units follow at residues 1449–1489 (CELP…PWKN), 1490–1531 (CTQS…CNPL), and 1532–1571 (YDQYCKDHFSDGHCDQGCNSAECEWDGLDCAEHVPERLAA). Asp-1457, Asn-1460, Asp-1475, and Asp-1478 together coordinate Ca(2+). Residue Asn-1489 is glycosylated (N-linked (GlcNAc...) asparagine). 5 cysteine pairs are disulfide-bonded: Cys-1490-Cys-1514, Cys-1496-Cys-1509, Cys-1505-Cys-1521, Cys-1536-Cys-1549, and Cys-1545-Cys-1561. A glycan (N-linked (GlcNAc...) asparagine) is linked at Asn-1587. An O-linked (GalNAc...) threonine glycan is attached at Thr-1725. Positions 1728 to 1760 (PPPPAQLHFMYVAAAAFVLLFFVGCGVLLSRKR) are interaction with PSEN1. The helical transmembrane segment at 1736-1756 (FMYVAAAAFVLLFFVGCGVLL) threads the bilayer. Residues 1757 to 2555 (SRKRRRQHGQ…QIARIPEAFK (799 aa)) lie on the Cytoplasmic side of the membrane. Lys-1759 is covalently cross-linked (Glycyl lysine isopeptide (Lys-Gly) (interchain with G-Cter in ubiquitin)). The interval 1780–1808 (KKKRREPLGEDSVGLKPLKNASDGALMDD) is disordered. Residue Thr-1861 is modified to Phosphothreonine. ANK repeat units lie at residues 1927–1956 (TGETALHLAARYSRSDAAKRLLEASADANI), 1960–1990 (MGRTPLHAAVSADAQGVFQILIRNRATDLDA), 1994–2023 (DGTTPLILAARLAVEGMLEDLINSHADVNA), 2027–2056 (LGKSALHWAAAVNNVDAAVVLLKNGANKDM), 2060–2089 (REETPLFLAAREGSYETAKVLLDHFANRDI), and 2095–2122 (RLPRDIAQERMHHDIVRLLDEYNLVRSP). Residues 1947-1955 (LLEASADAN) form an HIF1AN-binding region. Residue Asn-1955 is modified to (3S)-3-hydroxyasparagine; by HIF1AN; partial. Positions 2014 to 2022 (LINSHADVN) are HIF1AN-binding. At Asn-2022 the chain carries (3S)-3-hydroxyasparagine; by HIF1AN. 3 disordered regions span residues 2151–2194 (PGVQ…LDSS), 2379–2447 (LVQT…QPLG), and 2483–2555 (TPPS…EAFK). Over residues 2379-2408 (LVQTQQVQPQNLQMQQQNLQPANIQQQQSL) the composition is skewed to low complexity. Residues 2483–2502 (TPPSQHSYSSPVDNTPSHQL) are compositionally biased toward polar residues. Low complexity predominate over residues 2512-2527 (PSPESPDQWSSSSPHS). A compositionally biased stretch (polar residues) spans 2528–2547 (NVSDWSEGVSSPPTSMQSQI).

Belongs to the NOTCH family. As to quaternary structure, heterodimer of a C-terminal fragment N(TM) and an N-terminal fragment N(EC) which are probably linked by disulfide bonds. Interacts with DNER, DTX1, DTX2 and RBPJ/RBPSUH. Also interacts with MAML1, MAML2 and MAML3 which act as transcriptional coactivators for NOTCH1. The NOTCH1 intracellular domain interacts with SNW1; the interaction involves multimerized NOTCH1 NICD and is implicated in a formation of an intermediate preactivation complex which associates with DNA-bound CBF-1/RBPJ. The activated membrane-bound form interacts with AAK1 which promotes NOTCH1 stabilization. Forms a trimeric complex with FBXW7 and SGK1. Interacts with HIF1AN. HIF1AN negatively regulates the function of notch intracellular domain (NICD), accelerating myogenic differentiation. Interacts (via NICD) with SNAI1 (via zinc fingers); the interaction induces SNAI1 degradation via MDM2-mediated ubiquitination and inhibits SNAI1-induced cell invasion. Interacts (via NICD) with MDM2A. Interacts (via NICD) with BCL6; the interaction decreases MAML1 recruitment by NOTCH1 NICD on target genes DNA and inhibits NOTCH1 transactivation activity. Interacts with THBS4. Interacts (via the EGF-like repeat region) with CCN3 (via CTCK domain). Interacts (via EGF-like domains) with DLL4 (via N-terminal DSL and MNNL domains). Interacts with ZMIZ1. Interacts (via NICD domain) with MEGF10 (via the cytoplasmic domain). Interacts with DLL1 and JAG1. Interacts (via NICD domain) with PRAG1. Forms a complex with PRAG1, N1ICD and MAML1, in a MAML1-dependent manner. Interacts (via transmembrane region) with PSEN1; the interaction is direct. Interacts with ZFP64. In terms of processing, synthesized in the endoplasmic reticulum as an inactive form which is proteolytically cleaved by a furin-like convertase in the trans-Golgi network before it reaches the plasma membrane to yield an active, ligand-accessible form. Cleavage results in a C-terminal fragment N(TM) and a N-terminal fragment N(EC). Following ligand binding, it is cleaved by ADAM17 to yield a membrane-associated intermediate fragment called notch extracellular truncation (NEXT). Following endocytosis, this fragment is then cleaved by one of the catalytic subunits of gamma-secretase (PSEN1 or PSEN2), to release a Notch-derived peptide containing the intracellular domain (NICD) from the membrane. Post-translationally, phosphorylated. O-glycosylated on the EGF-like domains. O-glucosylated at Ser-435 by KDELC1 and KDELC2. Contains both O-linked fucose and O-linked glucose in the EGF-like domains 11, 12 and 13, which are interacting with the residues on DLL4. O-linked glycosylation by GALNT11 is involved in determination of left/right symmetry: glycosylation promotes activation of NOTCH1, possibly by promoting cleavage by ADAM17, modulating the balance between motile and immotile (sensory) cilia at the left-right organiser (LRO). MFNG-, RFNG- and LFNG-mediated modification of O-fucose residues at specific EGF-like domains results in inhibition of its activation by JAG1 and enhancement of its activation by DLL1 via an increased binding to DLL1. In terms of processing, ubiquitinated. Undergoes 'Lys-29'-linked polyubiquitination by ITCH; promotes the lysosomal degradation of non-activated internalized NOTCH1. Deubiquitination by USP12 is required for transport of internalized non-activated receptor from late endosomes to lysosomes for degradation. Monoubiquitination at Lys-1759 is required for activation by gamma-secretase cleavage, it promotes interaction with AAK1, which stabilizes it. Deubiquitination by EIF3F is necessary for nuclear import of activated Notch. Post-translationally, hydroxylated at Asn-1955 by HIF1AN. Hydroxylated at Asn-2022 by HIF1AN. Hydroxylation reduces affinity for HI1AN and may thus indirectly modulate negative regulation of NICD. In terms of tissue distribution, in fetal tissues most abundant in spleen, brain stem and lung. Also present in most adult tissues where it is found mainly in lymphoid tissues.

The protein resides in the cell membrane. Its subcellular location is the late endosome membrane. It localises to the nucleus. Functionally, functions as a receptor for membrane-bound ligands Jagged-1 (JAG1), Jagged-2 (JAG2) and Delta-1 (DLL1) to regulate cell-fate determination. Upon ligand activation through the released notch intracellular domain (NICD) it forms a transcriptional activator complex with RBPJ/RBPSUH and activates genes of the enhancer of split locus. Affects the implementation of differentiation, proliferation and apoptotic programs. Involved in angiogenesis; negatively regulates endothelial cell proliferation and migration and angiogenic sprouting. Involved in the maturation of both CD4(+) and CD8(+) cells in the thymus. Important for follicular differentiation and possibly cell fate selection within the follicle. During cerebellar development, functions as a receptor for neuronal DNER and is involved in the differentiation of Bergmann glia. Represses neuronal and myogenic differentiation. May play an essential role in postimplantation development, probably in some aspect of cell specification and/or differentiation. May be involved in mesoderm development, somite formation and neurogenesis. May enhance HIF1A function by sequestering HIF1AN away from HIF1A. Required for the THBS4 function in regulating protective astrogenesis from the subventricular zone (SVZ) niche after injury. Involved in determination of left/right symmetry by modulating the balance between motile and immotile (sensory) cilia at the left-right organiser (LRO). The sequence is that of Neurogenic locus notch homolog protein 1 (NOTCH1) from Homo sapiens (Human).